The following is a 181-amino-acid chain: c-Myc-binding protein homolog (181 aa).

The span at 111–127 (ESTEAAEQQQQQQQQEN) shows a compositional bias: low complexity. Disordered regions lie at residues 111–145 (ESTEAAEQQQQQQQQENGETELEKPNESSADVAEI) and 159–181 (VVTTDEAAQPSPTVQAEASGSSE). The span at 168-181 (PSPTVQAEASGSSE) shows a compositional bias: polar residues.

It belongs to the AMY1 family.

The protein localises to the nucleus. The chain is c-Myc-binding protein homolog from Drosophila melanogaster (Fruit fly).